Here is a 239-residue protein sequence, read N- to C-terminus: MARGCLCCLKYMMFLFNLIFWLCGCGLLGVGIWLSVSQGNFATFSPSFPSLSAANLVIAIGTIVMVTGFLGCLGAIKENRCLLLSFFIVLLIILLAELILIILFFVYMDKVNENARKDLKEGLLLYNSENNVGLKNAWNIIQAEMHCCGVTDYTDWYPVLGENTVPDRCCMENSQGCGRNSTTPLWKTGCYEKVKMWFDDNKHVLGTVGMCILIMQILGMAFSMTLFQHIHRTGKKYDA.

Topologically, residues 1 to 13 (MARGCLCCLKYMM) are cytoplasmic. A helical transmembrane segment spans residues 14–34 (FLFNLIFWLCGCGLLGVGIWL). At 35–55 (SVSQGNFATFSPSFPSLSAAN) the chain is on the extracellular side. A helical membrane pass occupies residues 56–76 (LVIAIGTIVMVTGFLGCLGAI). Topologically, residues 77–85 (KENRCLLLS) are cytoplasmic. The helical transmembrane segment at 86–106 (FFIVLLIILLAELILIILFFV) threads the bilayer. Over 107–203 (YMDKVNENAR…VKMWFDDNKH (97 aa)) the chain is Extracellular. Residue N180 is glycosylated (N-linked (GlcNAc...) asparagine). Residues 204-224 (VLGTVGMCILIMQILGMAFSM) form a helical membrane-spanning segment. Topologically, residues 225–239 (TLFQHIHRTGKKYDA) are cytoplasmic.

The protein belongs to the tetraspanin (TM4SF) family. In terms of assembly, found in a complex with GP6. Glycosylated.

Its subcellular location is the membrane. In Sus scrofa (Pig), this protein is Tetraspanin-9 (TSPAN9).